Reading from the N-terminus, the 463-residue chain is Phosphomannomutase (463 aa).

The Phosphoserine intermediate role is filled by S103. Residues S103, D248, D250, and D252 each contribute to the Mg(2+) site.

Belongs to the phosphohexose mutase family. It depends on Mg(2+) as a cofactor.

It is found in the cell membrane. The catalysed reaction is alpha-D-mannose 1-phosphate = D-mannose 6-phosphate. The protein operates within nucleotide-sugar biosynthesis; GDP-alpha-D-mannose biosynthesis; alpha-D-mannose 1-phosphate from D-fructose 6-phosphate: step 2/2. Its pathway is bacterial outer membrane biogenesis; LPS O-antigen biosynthesis. Its function is as follows. Involved in GDP-mannose biosynthesis which serves as the activated sugar nucleotide precursor for mannose residues in cell surface polysaccharides. The polypeptide is Phosphomannomutase (rfbB) (Vibrio cholerae serotype O1 (strain ATCC 39315 / El Tor Inaba N16961)).